The following is a 556-amino-acid chain: 2-isopropylmalate synthase (556 aa).

A Pyruvate carboxyltransferase domain is found at 33-307 (PIWCSSDLRD…HPQLDFSDID (275 aa)). The Mg(2+) site is built by aspartate 42, histidine 246, histidine 248, and asparagine 282. Positions 439 to 556 (ATSPYVLASH…AVTQAEAKAA (118 aa)) are regulatory domain.

It belongs to the alpha-IPM synthase/homocitrate synthase family. LeuA type 2 subfamily. In terms of assembly, homodimer. It depends on Mg(2+) as a cofactor.

The protein resides in the cytoplasm. It catalyses the reaction 3-methyl-2-oxobutanoate + acetyl-CoA + H2O = (2S)-2-isopropylmalate + CoA + H(+). It participates in amino-acid biosynthesis; L-leucine biosynthesis; L-leucine from 3-methyl-2-oxobutanoate: step 1/4. In terms of biological role, catalyzes the condensation of the acetyl group of acetyl-CoA with 3-methyl-2-oxobutanoate (2-ketoisovalerate) to form 3-carboxy-3-hydroxy-4-methylpentanoate (2-isopropylmalate). This chain is 2-isopropylmalate synthase, found in Pseudomonas aeruginosa (strain ATCC 15692 / DSM 22644 / CIP 104116 / JCM 14847 / LMG 12228 / 1C / PRS 101 / PAO1).